Reading from the N-terminus, the 714-residue chain is MSIHSVECNVGTNPITIETGKMARLADGAVVVRSGDTVVLVTVVSATKVKEGQTFFPLSVEYKEKAAAAGMFPGGYFKREGRPTEKEILTCRMTDRPLRPMFPKGYFYDTQVITLLLSADGENEPDILSINGASAACVVSDLPFAEPVGAVRVGRIDGQFVINPTNSQREHSQLDLVFAGTKDQVIMIEGSANELPEEDFIAALRVAQENVKVICEKQEELRAVCGKEKRAYELCLAKPELLEIGYEIAGDRIEEAIYAPSKVERQKKVGALRDEVEAAIKERHPEATDFDVEQVFEYIQKKAFRISIMEKDKRADGRALKQLRPLTAEVNVLPPVVHGSAMFARGETMSLCLATLAPMEERQYMDNYTGSVNEKRFILHYNFPPFSVGDTGRFGGQNRREIGHGALAERSIAPVVPGEQEFPYAIRVSSEIMESNGSTSMASVCAGTMSLLAAGVPLKRPVAGISVGLVTEQNDQHEITSYKTLLDIIGSEDFYGDMDFKLCGTSEGVTGYQLDLKLPGIPLSILEEAIHVAKAGRTDVLKVMNEAIAAPAQMSPNAPRIETTKIPADRIGELIGPGGKNIKAIQAESGADINIEEDGTVHIYAAKQEGLDRALELVTRMFKTIEIGELYTGKIVSTTTFGAFMEVLPGKDGLIHISELAEGRTAKTEDVVSVGDVVTAKCIGIDDKGRVKMSIRAALRDAKAAEAEAAGITE.

Positions 493 and 499 each coordinate Mg(2+). Positions 559 to 618 (PRIETTKIPADRIGELIGPGGKNIKAIQAESGADINIEEDGTVHIYAAKQEGLDRALELV) constitute a KH domain. One can recognise an S1 motif domain in the interval 628–696 (GELYTGKIVS…DKGRVKMSIR (69 aa)).

It belongs to the polyribonucleotide nucleotidyltransferase family. Requires Mg(2+) as cofactor.

It localises to the cytoplasm. It carries out the reaction RNA(n+1) + phosphate = RNA(n) + a ribonucleoside 5'-diphosphate. In terms of biological role, involved in mRNA degradation. Catalyzes the phosphorolysis of single-stranded polyribonucleotides processively in the 3'- to 5'-direction. The polypeptide is Polyribonucleotide nucleotidyltransferase (Akkermansia muciniphila (strain ATCC BAA-835 / DSM 22959 / JCM 33894 / BCRC 81048 / CCUG 64013 / CIP 107961 / Muc)).